A 183-amino-acid polypeptide reads, in one-letter code: Cell division protein SepF (183 aa).

Residues 13–58 (MHDDDDFDDDYEDYDDDFDEDYEDDKPSARKRLFTGSSKKDSVADE) are disordered. Residues 16 to 36 (DDDFDDDYEDYDDDFDEDYED) show a composition bias toward acidic residues.

It belongs to the SepF family. In terms of assembly, homodimer. Interacts with FtsZ.

It is found in the cytoplasm. Its function is as follows. Cell division protein that is part of the divisome complex and is recruited early to the Z-ring. Probably stimulates Z-ring formation, perhaps through the cross-linking of FtsZ protofilaments. Its function overlaps with FtsA. The protein is Cell division protein SepF of Lachnospira eligens (strain ATCC 27750 / DSM 3376 / VPI C15-48 / C15-B4) (Eubacterium eligens).